A 203-amino-acid chain; its full sequence is Ribonuclease HII (203 aa).

The RNase H type-2 domain occupies 15-201; sequence LLVAGLDEAG…VAQAPLRFPE (187 aa). Residues aspartate 21, glutamate 22, and aspartate 111 each contribute to the a divalent metal cation site.

This sequence belongs to the RNase HII family. Requires Mn(2+) as cofactor. Mg(2+) is required as a cofactor.

It is found in the cytoplasm. It carries out the reaction Endonucleolytic cleavage to 5'-phosphomonoester.. Its function is as follows. Endonuclease that specifically degrades the RNA of RNA-DNA hybrids. The protein is Ribonuclease HII of Thermus thermophilus (strain ATCC BAA-163 / DSM 7039 / HB27).